The primary structure comprises 404 residues: Transcription factor sem-2 (404 aa).

The HMG box DNA-binding region spans 93-161; that stretch reads IKRPMNAFMV…CHMQEYPDYK (69 aa). Disordered regions lie at residues 158–218 and 321–359; these read PDYK…QFQN and HTSP…NSAG. Low complexity predominate over residues 177-199; the sequence is QQPAQPQAPQQQQAPPRGASPQA. 2 stretches are compositionally biased toward polar residues: residues 207-218 and 347-359; these read TDQQSETQQFQN and ASEQ…NSAG.

The protein resides in the nucleus. Its function is as follows. Probable transcription factor required for embryogenesis, vulval development and cell fate specification of the postembryonic mesoderm (also known as the M lineage). Specifically, required for the specification of sex myoblast cells and their development into the muscles that are necessary for egg-laying. In addition, may be involved in RME GABAergic motor neuron progenitor cell fate specification. The protein is Transcription factor sem-2 of Caenorhabditis elegans.